Reading from the N-terminus, the 577-residue chain is Moesin (577 aa).

The region spanning 2 to 295 is the FERM domain; that stretch reads PKTISVRVTT…GNHELYMRRR (294 aa). A Phosphoserine modification is found at Ser-74. Lys-79 carries the N6-acetyllysine modification. At Lys-83 the chain carries N6-succinyllysine. The [IL]-x-C-x-x-[DE] motif motif lies at 115–120; that stretch reads IYCPPE. A Phosphotyrosine modification is found at Tyr-116. Cys-117 carries the S-nitrosocysteine modification. N6-acetyllysine occurs at positions 139 and 165. 3 disordered regions span residues 322–342, 358–419, and 468–518; these read LLEN…KIER, TKKA…QLAS, and STPH…NERV. Residues 358-401 show a composition bias toward basic and acidic residues; the sequence is TKKAQQELEEQTRRALELEQERKRAQSEAEKLAKERQEAEEAKE. Ser-407 carries the phosphoserine modification. The span at 492–518 shows a compositional bias: basic and acidic residues; that stretch reads AELRADAMAKDRSEEERTTEAEKNERV. Phosphoserine is present on Ser-527. A Phosphothreonine; by ROCK2 and STK10 modification is found at Thr-558.

As to quaternary structure, in resting T-cells, part of a PAG1-NHERF1-MSN complex which is disrupted upon TCR activation. Interacts with NHERF1. Interacts with PPP1R16B. Interacts with SELPLG and SYK; these interactions mediate the activation of SYK by SELPLG. Interacts with PDPN (via cytoplasmic domain); this interaction activates RHOA and promotes epithelial-mesenchymal transition. Interacts with SPN/CD43 cytoplasmic tail. Interacts with CD44. Interacts with ICAM2. Interacts with ICAM3 (via C-terminus). Interacts with PDZD8. Interacts with F-actin. Interacts with CD46. Interacts with PTPN6. Post-translationally, phosphorylation on Thr-558 by STK10 negatively regulates lymphocyte migration and polarization. Phosphorylation on Thr-558 is crucial for the formation of microvilli-like structures. Phosphorylation by ROCK2 suppresses the head-to-tail association of the N-terminal and C-terminal halves resulting in an opened conformation which is capable of actin and membrane-binding. In terms of processing, S-nitrosylation of Cys-117 is induced by interferon-gamma and oxidatively-modified low-densitity lipoprotein (LDL(ox)) implicating the iNOS-S100A8/9 transnitrosylase complex.

Its subcellular location is the cell membrane. It is found in the cytoplasm. The protein resides in the cytoskeleton. It localises to the apical cell membrane. The protein localises to the cell projection. Its subcellular location is the microvillus membrane. It is found in the microvillus. Functionally, ezrin-radixin-moesin (ERM) family protein that connects the actin cytoskeleton to the plasma membrane and thereby regulates the structure and function of specific domains of the cell cortex. Tethers actin filaments by oscillating between a resting and an activated state providing transient interactions between moesin and the actin cytoskeleton. Once phosphorylated on its C-terminal threonine, moesin is activated leading to interaction with F-actin and cytoskeletal rearrangement. These rearrangements regulate many cellular processes, including cell shape determination, membrane transport, and signal transduction. The role of moesin is particularly important in immunity acting on both T and B-cells homeostasis and self-tolerance, regulating lymphocyte egress from lymphoid organs. Modulates phagolysosomal biogenesis in macrophages. Also participates in immunologic synapse formation. The chain is Moesin from Mus musculus (Mouse).